Reading from the N-terminus, the 102-residue chain is MIPGEFKFGQGKILCNADKKAITIEVKNTGDRAVQVGSHYHFYEVNSALDFDRKLAWGKKLDIPSGAGVRFEPGDVKKVNLVDFTGERRIFGFHDEVNGYLD.

Belongs to the urease beta subunit family. As to quaternary structure, heterotrimer of UreA (gamma), UreB (beta) and UreC (alpha) subunits. Three heterotrimers associate to form the active enzyme.

It is found in the cytoplasm. The enzyme catalyses urea + 2 H2O + H(+) = hydrogencarbonate + 2 NH4(+). The protein operates within nitrogen metabolism; urea degradation; CO(2) and NH(3) from urea (urease route): step 1/1. This is Urease subunit beta from Clostridium perfringens.